A 225-amino-acid polypeptide reads, in one-letter code: T4 protein (225 aa).

It belongs to the poxviruses B9 family.

The chain is T4 protein from Rabbit fibroma virus (strain Kasza) (RFV).